Here is a 200-residue protein sequence, read N- to C-terminus: Pyridoxamine 5'-phosphate oxidase homolog (200 aa).

3 residues coordinate FMN: Phe-60, Lys-68, and Asn-125.

Belongs to the pyridoxamine 5'-phosphate oxidase family. It depends on FMN as a cofactor.

Its subcellular location is the cytoplasm. The protein resides in the nucleus. The protein is Pyridoxamine 5'-phosphate oxidase homolog of Saccharomyces cerevisiae (strain ATCC 204508 / S288c) (Baker's yeast).